Consider the following 396-residue polypeptide: Tyrosine--tRNA ligase (396 aa).

The 'HIGH' region motif lies at 42–51 (PTAPDIHLGH). A 'KMSKS' region motif is present at residues 226-230 (KMSKS). Lys229 lines the ATP pocket. One can recognise an S4 RNA-binding domain in the interval 334–395 (LPIANLLKEA…GKRKFAKIII (62 aa)).

The protein belongs to the class-I aminoacyl-tRNA synthetase family. TyrS type 2 subfamily. As to quaternary structure, homodimer.

It is found in the cytoplasm. The catalysed reaction is tRNA(Tyr) + L-tyrosine + ATP = L-tyrosyl-tRNA(Tyr) + AMP + diphosphate + H(+). Its function is as follows. Catalyzes the attachment of tyrosine to tRNA(Tyr) in a two-step reaction: tyrosine is first activated by ATP to form Tyr-AMP and then transferred to the acceptor end of tRNA(Tyr). In Francisella tularensis subsp. tularensis (strain SCHU S4 / Schu 4), this protein is Tyrosine--tRNA ligase.